Reading from the N-terminus, the 253-residue chain is 5'/3'-nucleotidase SurE (253 aa).

A divalent metal cation is bound by residues aspartate 8, aspartate 9, serine 39, and asparagine 92.

It belongs to the SurE nucleotidase family. Requires a divalent metal cation as cofactor.

It is found in the cytoplasm. It carries out the reaction a ribonucleoside 5'-phosphate + H2O = a ribonucleoside + phosphate. The catalysed reaction is a ribonucleoside 3'-phosphate + H2O = a ribonucleoside + phosphate. The enzyme catalyses [phosphate](n) + H2O = [phosphate](n-1) + phosphate + H(+). Its function is as follows. Nucleotidase with a broad substrate specificity as it can dephosphorylate various ribo- and deoxyribonucleoside 5'-monophosphates and ribonucleoside 3'-monophosphates with highest affinity to 3'-AMP. Also hydrolyzes polyphosphate (exopolyphosphatase activity) with the preference for short-chain-length substrates (P20-25). Might be involved in the regulation of dNTP and NTP pools, and in the turnover of 3'-mononucleotides produced by numerous intracellular RNases (T1, T2, and F) during the degradation of various RNAs. The protein is 5'/3'-nucleotidase SurE of Erwinia tasmaniensis (strain DSM 17950 / CFBP 7177 / CIP 109463 / NCPPB 4357 / Et1/99).